The primary structure comprises 437 residues: Glutamate-1-semialdehyde 2,1-aminomutase (437 aa).

Position 279 is an N6-(pyridoxal phosphate)lysine (Lys-279).

It belongs to the class-III pyridoxal-phosphate-dependent aminotransferase family. HemL subfamily. Homodimer. Pyridoxal 5'-phosphate serves as cofactor.

Its subcellular location is the cytoplasm. The enzyme catalyses (S)-4-amino-5-oxopentanoate = 5-aminolevulinate. It participates in porphyrin-containing compound metabolism; protoporphyrin-IX biosynthesis; 5-aminolevulinate from L-glutamyl-tRNA(Glu): step 2/2. The polypeptide is Glutamate-1-semialdehyde 2,1-aminomutase (Sorangium cellulosum (strain So ce56) (Polyangium cellulosum (strain So ce56))).